The sequence spans 424 residues: UPF0053 protein MG146 homolog (424 aa).

Residues 6 to 191 (SGGLLALIII…EQNGLFTKED (186 aa)) enclose the CNNM transmembrane domain. The next 4 membrane-spanning stretches (helical) occupy residues 7 to 27 (GGLL…SAVV), 71 to 91 (LITI…ILFL), 101 to 121 (AISS…LCEI), and 135 to 155 (LVYF…ITKL). CBS domains are found at residues 210-270 (MIKW…NEPF) and 275-335 (LLYP…EHDE).

It belongs to the UPF0053 family.

The protein localises to the cell membrane. The sequence is that of UPF0053 protein MG146 homolog from Mycoplasma pneumoniae (strain ATCC 29342 / M129 / Subtype 1) (Mycoplasmoides pneumoniae).